The primary structure comprises 319 residues: Ribonucleoside-diphosphate reductase small chain (319 aa).

Fe cation contacts are provided by aspartate 70, glutamate 101, and histidine 104. Tyrosine 108 is a catalytic residue. Residues glutamate 163, glutamate 197, and histidine 200 each coordinate Fe cation. The segment at 313–319 is interaction with R1; sequence FSLDVDF.

This sequence belongs to the ribonucleoside diphosphate reductase small chain family. Interacts with RNR1/OPG080 subunit. Can interact with host RNR1 supunit. Fe cation serves as cofactor.

It carries out the reaction a 2'-deoxyribonucleoside 5'-diphosphate + [thioredoxin]-disulfide + H2O = a ribonucleoside 5'-diphosphate + [thioredoxin]-dithiol. Its function is as follows. Ribonucleoside-diphosphate reductase holoenzyme provides the precursors necessary for viral DNA synthesis. Allows virus growth in non-dividing cells. Catalyzes the biosynthesis of deoxyribonucleotides from the corresponding ribonucleotides. The polypeptide is Ribonucleoside-diphosphate reductase small chain (OPG048) (Homo sapiens (Human)).